Consider the following 478-residue polypeptide: Protein FAM83E (478 aa).

The interval methionine 1 to proline 293 is DUF1669. Disordered stretches follow at residues proline 292–histidine 334, arginine 359–alanine 436, and aspartate 452–proline 478. The span at arginine 309 to serine 319 shows a compositional bias: basic residues. Polar residues predominate over residues arginine 379–aspartate 388.

It belongs to the FAM83 family. Directly interacts (via DUF1669) with CSNK1A1, CSNK1A1L, CSNK1D and CSNK1E. May interact with RAF1.

The protein localises to the cytoplasm. The protein resides in the perinuclear region. Its function is as follows. May play a role in MAPK signaling. This is Protein FAM83E from Homo sapiens (Human).